Consider the following 345-residue polypeptide: Phosphoribosylformylglycinamidine cyclo-ligase (345 aa).

Belongs to the AIR synthase family.

The protein localises to the cytoplasm. The catalysed reaction is 2-formamido-N(1)-(5-O-phospho-beta-D-ribosyl)acetamidine + ATP = 5-amino-1-(5-phospho-beta-D-ribosyl)imidazole + ADP + phosphate + H(+). It participates in purine metabolism; IMP biosynthesis via de novo pathway; 5-amino-1-(5-phospho-D-ribosyl)imidazole from N(2)-formyl-N(1)-(5-phospho-D-ribosyl)glycinamide: step 2/2. The sequence is that of Phosphoribosylformylglycinamidine cyclo-ligase from Shewanella oneidensis (strain ATCC 700550 / JCM 31522 / CIP 106686 / LMG 19005 / NCIMB 14063 / MR-1).